Here is a 243-residue protein sequence, read N- to C-terminus: MTNQQDTLFAEPGEHQGNFQFDSRVAGVFGDMIRRSVPGYTQIINTIGEIADRCVTPGSNVYDLGCSLGAATLAIRRKIEGRNARIFAIDNSEPMLVRAEENLSAYVSDTKVFFQLADIRDQTFENASLVVLNFTLQFLPPDDRDTLLARIYQGLNPGGILLLSEKLKFDGVDVQALLDSLHLDFKRANGYSELEISQKRSAIENVLIPDTLEQHKTRLNQAGFTQADLWFQCFNFASMVAIK.

S-adenosyl-L-methionine contacts are provided by residues Y40, 65 to 67 (GCS), 90 to 91 (DN), 118 to 119 (DI), N133, and R200.

It belongs to the class I-like SAM-binding methyltransferase superfamily. Cx-SAM synthase family. As to quaternary structure, homodimer.

The catalysed reaction is prephenate + S-adenosyl-L-methionine = carboxy-S-adenosyl-L-methionine + 3-phenylpyruvate + H2O. Catalyzes the conversion of S-adenosyl-L-methionine (SAM) to carboxy-S-adenosyl-L-methionine (Cx-SAM). This is Carboxy-S-adenosyl-L-methionine synthase from Shewanella amazonensis (strain ATCC BAA-1098 / SB2B).